A 642-amino-acid chain; its full sequence is Capsid vertex component 2 (642 aa).

Positions 1-48 (MSLLHTFWRLPVAVFFEPHEENVLRCPERVLRRLLEDAAVTMRGGGWR) are interaction with major capsid protein/MCP. The interval 97-125 (DEGPSPRTLLQPPCRPRSSSPGTGVAGAS) is disordered.

Belongs to the herpesviridae CVC2 protein family. As to quaternary structure, heterodimerizes with CVC1. Interacts with major capsid protein/MCP and triplex capsid protein 1/TRX1 at the pentamer vertices. Interacts with the large tegument protein/LTP.

It localises to the virion. It is found in the host nucleus. Its function is as follows. Capsid vertex-specific component that plays a role during viral DNA encapsidation, assuring correct genome cleavage and presumably stabilizing capsids that contain full-length viral genomes. Participates in the interaction between the capsid and the tegument through interaction with the large tegument protein/LTP. This is Capsid vertex component 2 from Homo sapiens (Human).